The sequence spans 1475 residues: MIIEERKNHELNLESIDRDLRMENVRQSAEKLGWEHFARSVRRNLLEKRQTLDARTRLDVLGSLVFMKEHLPIDNDATIARKVQQLSEGLGEHCVFSTQNSGFSIRNPDVTIDIGVAEDQISTCKIGYFGQPLTDAPGALALMKNGEFSKLRDSITAILSSLPKEITLSEKNACKEAFRALDQLLIRDAADSSFTAINTGKYGFYAPRNELRSGRIYYVAEPVLIRLAEKEGKTKADASYLDLLPYIEISFFKHDKPSKLPVFTQTGEWSTFNDANVCICVRFNQGFLLSQQTIRKLSHIVPKSPLVRNYVNFYRYMTGRVGVKSNLKLLTQFPDEGDIQQQYQVDSKMLTKEDDVVAMEMYLSDFRDLSKLIETLRSEWKHASLWESILAICESSKGEQKEVNAVDMQLVLRRTEFFLQFDTDYGSMTMQIFEKSPSNYVVKTTSQITGESPSLDFDKMLTEKLNSTWSIPATLTFAITDLKCRINSVLNCVISFDSSSSSDKQHQNYWSISNNNTQLMQSAAQKSAAKCTKKKVTVLEVGPAIEPTQLVYTRENDEEFQGSLLSSFGEVDDYYVKTSTIGRTRPQPRPKREPNQLTSMDMMSAELDKSRHTMEGSMRDAQTSSFLDAARVRMKQSIGAAHAVGLASHQPPASPVAAAAAAPGGPMRHNSYPSGFEPPPSVAPYDFPADPSKKQRKQRAKKQPGEEPPAGRGKGGKKGRGAGAVGAAAAGGRKSAGGAGENPFGMDPMRPPMLQRSSSEQHNPNPHQMSQYQMQQYQQNQQFRMHQMQQQQQQQFQMQSPKNPLVPAYTDEDSDEECDPPPPPKPQVSTSSRMSSVPSHPPPPPQQLGNPMVGYPGMPLQSPNHLPLTPSPLSAPPKPFSPEQQHHFGMKMRETSYWKELERLETKPDVEKLKQQLSSSSSSSQAEASDPPSTSTEAQDPPKPSSSSAPPPPKKKLGLEAAISKIRGQQEQALQKQLQQQESVESELATPHPGSSGAPPLAPHQVNRARNLNDIFDDEADDSSPTADIKPSLQALQKPTDTSSQSTSSEPPPKKEPADEQPEREKEKLILKIPKMLKPVVDDRREDRKERDRDRDRDRDRDEDREKVRDKEDKAQREKDKKEKERERRRQRDRDRTEQKKSDREKEPSKKRKLEKKDEKEKDRREPERKKGKSDGKEYSKASTTSLIPTLSLKNFRIPKKDTVEEEKKDVKEEAPGPSSSTESKKEPPSAAPITRKESTTAPVAPAVQQQQQRKESFTALPSLPEQQQHHREPLLKKKPPLQPPPPPQMTGPPIGIYPGPPAPGNLPGSSRPSGNRKQPLPPPPPMIRGPPPDQMYRDRSGGGGGSMRGGFPPASHYHGGTSGVNKQVASYAQGLPPGMGPPVVKPHGNNYQASQWVRPPTHRDSSHSYHGMPSLGPPQLQREPPAPPPPQMIPLPKDPPVLREHPREHRAHRGGADDDGPDSPEEGTLRIDDE.

3 disordered regions span residues 579 to 600 (STIG…LTSM), 645 to 894 (GLAS…KMRE), and 908 to 1475 (PDVE…IDDE). Low complexity predominate over residues 655–666 (PVAAAAAAPGGP). Polar residues predominate over residues 755–766 (QRSSSEQHNPNP). Residues 767 to 800 (HQMSQYQMQQYQQNQQFRMHQMQQQQQQQFQMQS) are compositionally biased toward low complexity. Residues 810–819 (TDEDSDEECD) are compositionally biased toward acidic residues. Residues 829–838 (STSSRMSSVP) are compositionally biased toward low complexity. Residues 869–880 (TPSPLSAPPKPF) are compositionally biased toward pro residues. Over residues 915–929 (QQLSSSSSSSQAEAS) the composition is skewed to low complexity. Over residues 941 to 952 (PPKPSSSSAPPP) the composition is skewed to pro residues. Composition is skewed to low complexity over residues 969-989 (QQEQ…SELA) and 1037-1049 (QKPT…STSS). Composition is skewed to basic and acidic residues over residues 1052-1070 (PPKK…EKLI), 1080-1148 (VVDD…EKEP), and 1155-1180 (EKKD…KEYS). Residues 1098-1135 (DRDRDEDREKVRDKEDKAQREKDKKEKERERRRQRDRD) are a coiled coil. Residues 1181–1193 (KASTTSLIPTLSL) show a composition bias toward polar residues. Residues 1199-1215 (PKKDTVEEEKKDVKEEA) are compositionally biased toward basic and acidic residues. Low complexity predominate over residues 1242–1252 (APVAPAVQQQQ). A compositionally biased stretch (pro residues) spans 1281–1291 (PLQPPPPPQMT). Residues 1308-1317 (PGSSRPSGNR) show a composition bias toward polar residues. Composition is skewed to pro residues over residues 1320 to 1334 (PLPP…PPPD) and 1425 to 1440 (PPAP…PKDP).

The protein belongs to the Mediator complex subunit 1 family. In terms of assembly, component of the Mediator complex.

Its subcellular location is the nucleus. In terms of biological role, component of the Mediator complex, a coactivator involved in the regulated transcription of nearly all RNA polymerase II-dependent genes. Mediator functions as a bridge to convey information from gene-specific regulatory proteins to the basal RNA polymerase II transcription machinery. Mediator is recruited to promoters by direct interactions with regulatory proteins and serves as a scaffold for the assembly of a functional preinitiation complex with RNA polymerase II and the general transcription factors. The sequence is that of Mediator of RNA polymerase II transcription subunit 1.1 (sop-3) from Caenorhabditis elegans.